The sequence spans 1819 residues: Protein REDUCED CHLOROPLAST COVERAGE 2 (1819 aa).

Over residues methionine 1–lysine 17 the composition is skewed to basic residues. 4 disordered regions span residues methionine 1–lysine 23, lysine 128–glutamate 180, glutamine 595–lysine 619, and lysine 634–glutamine 664. 2 stretches are compositionally biased toward basic and acidic residues: residues leucine 135–glycine 145 and serine 600–proline 612. Positions glutamate 329–lysine 603 constitute a Clu domain. Residues threonine 649 to alanine 680 are a coiled coil. 5 TPR repeats span residues glycine 892–valine 925, alanine 934–glutamate 967, methionine 976–threonine 1009, alanine 1018–leucine 1051, and alanine 1060–lysine 1093. Disordered regions lie at residues serine 1152–serine 1360, lysine 1413–glutamate 1456, lysine 1468–valine 1513, leucine 1527–proline 1573, serine 1616–methionine 1670, and leucine 1731–aspartate 1809. Basic and acidic residues-rich tracts occupy residues serine 1199–lysine 1224 and lysine 1230–histidine 1239. The residue at position 1244 (serine 1244) is a Phosphoserine. Positions lysine 1269–alanine 1313 are enriched in polar residues. Serine 1320 is modified (phosphoserine). The segment covering leucine 1343–lysine 1354 has biased composition (polar residues). 2 stretches are compositionally biased toward polar residues: residues cysteine 1496–glutamate 1511 and asparagine 1536–serine 1546. Positions aspartate 1551 to lysine 1566 are enriched in basic and acidic residues. A compositionally biased stretch (polar residues) spans serine 1650–asparagine 1665. Basic and acidic residues predominate over residues serine 1742–glycine 1759. Residues glutamine 1767–serine 1778 show a composition bias toward polar residues. Positions threonine 1785–glycine 1800 are enriched in basic and acidic residues.

Expressed in the non-epidermal tissues of the true leaves. Not detected in the vegetative shoot meristem and leaf primordia.

Its subcellular location is the nucleus. The protein localises to the cytoplasm. The protein resides in the cytosol. Its function is as follows. Negatively regulates meristematic tissue proliferation by integrating developmental signals with carbon source availability. May act as the scaffold of a protein complex, which sequesters key factors that are required for the G2 to M transition in meristematic tissues. Together with REC2, REC3 and FMT/CLU, contributes to the establishment of the cellular volume devoted to the chloroplast compartment. This chain is Protein REDUCED CHLOROPLAST COVERAGE 2, found in Arabidopsis thaliana (Mouse-ear cress).